The chain runs to 280 residues: S-methyl-5'-thioadenosine phosphorylase (280 aa).

Phosphate contacts are provided by residues Ser-15, 57–58, and 90–91; these read RH and TA. Met-193 serves as a coordination point for substrate. Residue Thr-194 participates in phosphate binding. Residue 217–219 coordinates substrate; that stretch reads DYD.

This sequence belongs to the PNP/MTAP phosphorylase family. MTAP subfamily. As to quaternary structure, homotrimer.

The protein localises to the cytoplasm. It is found in the nucleus. It carries out the reaction S-methyl-5'-thioadenosine + phosphate = 5-(methylsulfanyl)-alpha-D-ribose 1-phosphate + adenine. It functions in the pathway amino-acid biosynthesis; L-methionine biosynthesis via salvage pathway; S-methyl-5-thio-alpha-D-ribose 1-phosphate from S-methyl-5'-thioadenosine (phosphorylase route): step 1/1. In terms of biological role, catalyzes the reversible phosphorylation of S-methyl-5'-thioadenosine (MTA) to adenine and 5-methylthioribose-1-phosphate. Involved in the breakdown of MTA, a major by-product of polyamine biosynthesis. Responsible for the first step in the methionine salvage pathway after MTA has been generated from S-adenosylmethionine. Has broad substrate specificity with 6-aminopurine nucleosides as preferred substrates. In Danio rerio (Zebrafish), this protein is S-methyl-5'-thioadenosine phosphorylase (mtap).